The sequence spans 336 residues: Inactive serine/threonine-protein kinase BKN2 (336 aa).

Residues methionine 1 to serine 25 form a disordered region. Glycine 2 carries N-myristoyl glycine lipidation. Cysteine 4 is lipidated: S-palmitoyl cysteine. In terms of domain architecture, Protein kinase spans tyrosine 52–alanine 332.

The protein belongs to the protein kinase superfamily. Ser/Thr protein kinase family. Component of an immune signaling complex made of, at least, SZE1, BKN2/SZE2, ZAR1 and ZED1. Interacts directly with ZAR1 and Pseudomonas syringae HOPZ1A at the plasma membrane. N-terminal myristoylation is critical for plasma membrane localization and implication in defense responses. Expressed in stigma and ovaries in flowers, and in stems and seedlings.

It is found in the cell membrane. Together with SZE1 and ZED1, required for effector-triggered immunity (e.g. Pseudomonas syringae type III effector HopZ1a) via the activation of ZAR1, thus being essential for resistance against P. syringae pv. tomato DC3000 expressing HopZ1a. Collaboratively with BKN1, involved in compatible pollen-stigma interactions. This Arabidopsis thaliana (Mouse-ear cress) protein is Inactive serine/threonine-protein kinase BKN2.